A 220-amino-acid polypeptide reads, in one-letter code: MILLKLYLTLAAILCQSRGTTSLDLDDLMTTNPEIQNEIINKHNDLRRTVDPPAKNMLKMSWDNIIAESAKRAALRCNQNEHTPVSGRTIGGVVCGENYFMSSNPRTWSFGIQSWFDERNYFKFGFGPTRAGVMVGHYTQVVWYKSYKMGCAINLCPNEPLKYFLVCQYCPGGNVVGRKYEPYAIGEPCAACPNNCDNGLCTNPCEHSNQYINCPDLTKQ.

A signal peptide spans 1–22 (MILLKLYLTLAAILCQSRGTTS). Residues 41-169 (NKHNDLRRTV…PLKYFLVCQY (129 aa)) enclose the SCP domain. 5 disulfides stabilise this stretch: Cys-77-Cys-156, Cys-95-Cys-170, Cys-151-Cys-167, Cys-189-Cys-196, and Cys-192-Cys-201. The ShKT domain maps to 205–220 (CEHSNQYINCPDLTKQ).

It belongs to the CRISP family. In terms of processing, contains 8 disulfide bonds. Expressed by the venom gland.

The protein localises to the secreted. Its function is as follows. Blocks ryanodine receptors, and potassium channels. The chain is Cysteine-rich venom protein VAR5 from Varanus acanthurus (Ridge-tailed monitor).